The sequence spans 209 residues: MERKVFSKDGQELRTIDLDDGVFNIDVSYGSIYNAINNELANLRVGTASTKTRAEVRGSSKKPWKQKGTGRARVGTRRNPVWVGGGIALGPKPRDYSYKLPKKVKRLAFKSVLSLCASVDDRLKVVENFTIDSGKTKELALIIKNFIKHNGRTVILLGNDDQMIKRAGKNIRDLKILSFNRLRVVDLFYTKNLIALESAINGLNELYVK.

The protein belongs to the universal ribosomal protein uL4 family. As to quaternary structure, part of the 50S ribosomal subunit.

One of the primary rRNA binding proteins, this protein initially binds near the 5'-end of the 23S rRNA. It is important during the early stages of 50S assembly. It makes multiple contacts with different domains of the 23S rRNA in the assembled 50S subunit and ribosome. Functionally, forms part of the polypeptide exit tunnel. This chain is Large ribosomal subunit protein uL4, found in Borrelia duttonii (strain Ly).